Here is a 2635-residue protein sequence, read N- to C-terminus: Protein unc-79 homolog (2635 aa).

Serine 754 and serine 758 each carry phosphoserine. 6 disordered regions span residues 907 to 929, 1538 to 1575, 1607 to 1678, 1693 to 1832, 1863 to 1909, and 1929 to 1950; these read GPEG…NCTE, IAQR…DARR, LIDL…SVLS, SKDF…FKIQ, LGEQ…TQYR, and LEHQ…IQPG. Positions 1666 to 1678 are enriched in low complexity; it reads SSPSVPSHPSVLS. Residues 1699 to 1713 are compositionally biased toward polar residues; sequence KDSGNNQSAGNTDSA. The span at 1761–1775 shows a compositional bias: basic and acidic residues; the sequence is LDDHPDPGTEGEKPG. 2 stretches are compositionally biased toward polar residues: residues 1897 to 1909 and 1929 to 1947; these read ETSS…TQYR and LEHQ…TEQI. The next 2 membrane-spanning stretches (helical) occupy residues 2223–2243 and 2466–2486; these read LLSF…ELCG and VLHM…TVYC.

This sequence belongs to the unc-79 family. As to quaternary structure, NALCN complex consists of NALCN and auxiliary subunits, UNC79, UNC80 and NACL1. These auxiliary subunits are essential for the NALCN channel function. UNC80 bridges NALCN to UNC79.

It is found in the cell membrane. In terms of biological role, auxiliary subunit of the NALCN sodium channel complex, a voltage-gated ion channel responsible for the resting Na(+) permeability that controls neuronal excitability. Activated by neuropeptides substance P, neurotensin, and extracellular calcium that regulates neuronal excitability by controlling the sizes of NALCN-dependent sodium-leak current. In Homo sapiens (Human), this protein is Protein unc-79 homolog (UNC79).